Here is a 406-residue protein sequence, read N- to C-terminus: CinA-like protein (406 aa).

Belongs to the CinA family.

In Deinococcus geothermalis (strain DSM 11300 / CIP 105573 / AG-3a), this protein is CinA-like protein.